A 187-amino-acid chain; its full sequence is Capsid protein (187 aa).

The interval 150–187 (RRGGARASRSPRRRTPSPRRRRSQSPRRRRSQSPSANC) is disordered. Residues 158-180 (RSPRRRTPSPRRRRSQSPRRRRS) show a composition bias toward basic residues. Ser159, Ser166, and Ser174 each carry phosphoserine; by host. A 1; half-length repeat occupies 159–165 (SPRRRTP). Residues 159 to 181 (SPRRRTPSPRRRRSQSPRRRRSQ) are 3 X 8 AA repeats of S-P-R-R-R-[PR]-S-Q. A Bipartite nuclear localization signal motif is present at residues 162–179 (RRTPSPRRRRSQSPRRRR). 2 repeat units span residues 166–173 (SPRRRRSQ) and 174–181 (SPRRRRSQ). The RNA binding stretch occupies residues 181 to 187 (QSPSANC).

The protein belongs to the orthohepadnavirus core antigen family. In terms of assembly, homodimerizes, then multimerizes. Interacts with cytosol exposed regions of viral L glycoprotein present in the reticulum-to-Golgi compartment. Interacts with human FLNB. Phosphorylated form interacts with host importin alpha; this interaction depends on the exposure of the NLS, which itself depends upon genome maturation and/or phosphorylation of the capsid protein. Interacts with host NUP153. In terms of processing, phosphorylated by host SRPK1, SRPK2, and maybe protein kinase C or GAPDH. Phosphorylation is critical for pregenomic RNA packaging. Protein kinase C phosphorylation is stimulated by HBx protein and may play a role in transport of the viral genome to the nucleus at the late step during the viral replication cycle.

The protein resides in the virion. It localises to the host cytoplasm. In terms of biological role, self assembles to form an icosahedral capsid. Most capsids appear to be large particles with an icosahedral symmetry of T=4 and consist of 240 copies of capsid protein, though a fraction forms smaller T=3 particles consisting of 180 capsid proteins. Entering capsids are transported along microtubules to the nucleus. Phosphorylation of the capsid is thought to induce exposure of nuclear localization signal in the C-terminal portion of the capsid protein that allows binding to the nuclear pore complex via the importin (karyopherin-) alpha and beta. Capsids are imported in intact form through the nuclear pore into the nuclear basket, where it probably binds NUP153. Only capsids that contain the mature viral genome can release the viral DNA and capsid protein into the nucleoplasm. Immature capsids get stuck in the basket. Capsids encapsulate the pre-genomic RNA and the P protein. Pre-genomic RNA is reverse-transcribed into DNA while the capsid is still in the cytoplasm. The capsid can then either be directed to the nucleus, providing more genomes for transcription, or bud through the endoplasmic reticulum to provide new virions. The polypeptide is Capsid protein (Marmota monax (Woodchuck)).